The chain runs to 625 residues: Tyrosine-protein kinase ITK/TSK (625 aa).

Positions 4 to 117 (FILLEEQLIK…WVLTLKEETR (114 aa)) constitute a PH domain. Residues 119–155 (NNSLVSKYHPNFWMDGRWRCCSQLEKPAVGCAPYDPS) form a Btk-type zinc finger. Zn(2+) contacts are provided by His127, Cys138, Cys139, and Cys149. The interval 153–174 (DPSKNASKKPLPPTPEDNRRSF) is disordered. In terms of domain architecture, SH3 spans 177–237 (PEETLVIALY…PSSYLVEKSP (61 aa)). Tyr186 carries the phosphotyrosine; by autocatalysis modification. One can recognise an SH2 domain in the interval 245–343 (WYNKSISRDK…GLVTRLRYPV (99 aa)). Residues 368–620 (LTFVQEIGSG…SQLLSQLAEI (253 aa)) form the Protein kinase domain. ATP-binding positions include 374–382 (IGSGQFGLV) and Lys396. The active-site Proton acceptor is Asp487. Tyr517 is modified (phosphotyrosine; by LCK). Ser570 bears the Phosphoserine mark.

It belongs to the protein kinase superfamily. Tyr protein kinase family. TEC subfamily. In terms of assembly, homooligomerizes; this association negatively regulates kinase activity. Interacts with PPIA/CYPA; this interaction regulates TCR signal strength via a proline-directed conformational switch in ITK. Interacts with THEMIS. Interacts with FASLG. Interacts with VAV1; this interaction is important for VAV1 localization and TCR-induced actin polarization. Interacts with TBX21. The cofactor is Zn(2+). Phosphorylated at Tyr-517 in the activation loop of the kinase domain by LCK. Subsequent autophosphorylation at Tyr-186 leads to the kinase activation. The autophosphorylated Tyr-186 lies within the substrate binding sequence of the SH3 domain. In terms of processing, ubiquitinated. In terms of tissue distribution, is detected in the thymus, lymph node and very faintly in the spleen, but is not detected in the liver, lung, kidney, heart, brain, intestine or testis. Expressed in T-lymphocytes and mast cells. It may also be expressed in natural killer cells.

The protein resides in the cytoplasm. It is found in the nucleus. It carries out the reaction L-tyrosyl-[protein] + ATP = O-phospho-L-tyrosyl-[protein] + ADP + H(+). Its function is as follows. Tyrosine kinase that plays an essential role in regulation of the adaptive immune response. Regulates the development, function and differentiation of conventional T-cells and nonconventional NKT-cells. When antigen presenting cells (APC) activate T-cell receptor (TCR), a series of phosphorylation lead to the recruitment of ITK to the cell membrane, in the vicinity of the stimulated TCR receptor, where it is phosphorylated by LCK. Phosphorylation leads to ITK autophosphorylation and full activation. Once activated, phosphorylates PLCG1, leading to the activation of this lipase and subsequent cleavage of its substrates. In turn, the endoplasmic reticulum releases calcium in the cytoplasm and the nuclear activator of activated T-cells (NFAT) translocates into the nucleus to perform its transcriptional duty. Phosphorylates 2 essential adapter proteins: the linker for activation of T-cells/LAT protein and LCP2. Then, a large number of signaling molecules such as VAV1 are recruited and ultimately lead to lymphokine production, T-cell proliferation and differentiation. Required for TCR-mediated calcium response in gamma-delta T-cells, may also be involved in the modulation of the transcriptomic signature in the Vgamma2-positive subset of immature gamma-delta T-cells. Phosphorylates TBX21 at 'Tyr-525' and mediates its interaction with GATA3. This is Tyrosine-protein kinase ITK/TSK (Itk) from Mus musculus (Mouse).